A 288-amino-acid chain; its full sequence is 4-hydroxy-3-methylbut-2-enyl diphosphate reductase (288 aa).

Residue cysteine 12 participates in [4Fe-4S] cluster binding. 2 residues coordinate (2E)-4-hydroxy-3-methylbut-2-enyl diphosphate: histidine 42 and histidine 77. Histidine 42 and histidine 77 together coordinate dimethylallyl diphosphate. Positions 42 and 77 each coordinate isopentenyl diphosphate. Cysteine 99 contacts [4Fe-4S] cluster. Histidine 127 is a binding site for (2E)-4-hydroxy-3-methylbut-2-enyl diphosphate. Histidine 127 is a binding site for dimethylallyl diphosphate. Residue histidine 127 participates in isopentenyl diphosphate binding. Glutamate 129 acts as the Proton donor in catalysis. A (2E)-4-hydroxy-3-methylbut-2-enyl diphosphate-binding site is contributed by threonine 165. Residue cysteine 193 participates in [4Fe-4S] cluster binding. Serine 221, serine 222, asparagine 223, and serine 265 together coordinate (2E)-4-hydroxy-3-methylbut-2-enyl diphosphate. 4 residues coordinate dimethylallyl diphosphate: serine 221, serine 222, asparagine 223, and serine 265. The isopentenyl diphosphate site is built by serine 221, serine 222, asparagine 223, and serine 265.

Belongs to the IspH family. Requires [4Fe-4S] cluster as cofactor.

It catalyses the reaction isopentenyl diphosphate + 2 oxidized [2Fe-2S]-[ferredoxin] + H2O = (2E)-4-hydroxy-3-methylbut-2-enyl diphosphate + 2 reduced [2Fe-2S]-[ferredoxin] + 2 H(+). The catalysed reaction is dimethylallyl diphosphate + 2 oxidized [2Fe-2S]-[ferredoxin] + H2O = (2E)-4-hydroxy-3-methylbut-2-enyl diphosphate + 2 reduced [2Fe-2S]-[ferredoxin] + 2 H(+). Its pathway is isoprenoid biosynthesis; dimethylallyl diphosphate biosynthesis; dimethylallyl diphosphate from (2E)-4-hydroxy-3-methylbutenyl diphosphate: step 1/1. The protein operates within isoprenoid biosynthesis; isopentenyl diphosphate biosynthesis via DXP pathway; isopentenyl diphosphate from 1-deoxy-D-xylulose 5-phosphate: step 6/6. Its function is as follows. Catalyzes the conversion of 1-hydroxy-2-methyl-2-(E)-butenyl 4-diphosphate (HMBPP) into a mixture of isopentenyl diphosphate (IPP) and dimethylallyl diphosphate (DMAPP). Acts in the terminal step of the DOXP/MEP pathway for isoprenoid precursor biosynthesis. This is 4-hydroxy-3-methylbut-2-enyl diphosphate reductase from Caldanaerobacter subterraneus subsp. tengcongensis (strain DSM 15242 / JCM 11007 / NBRC 100824 / MB4) (Thermoanaerobacter tengcongensis).